The primary structure comprises 156 residues: Aspercryptin biosynthesis cluster protein B (156 aa).

Residues 1 to 39 (MRMANRIGAGRKSALQLSHLRTRLTSSAAAVATAPTLDP) form the signal peptide.

The protein belongs to the YciI family.

The protein operates within secondary metabolite biosynthesis. Part of the gene cluster that mediates the biosynthesis of aspercryptins, linear lipopeptides built from six amino acids including 2 highly unusual and nonproteogenic amino acids, 2-amino-octanoic acid (2aoa) and 2-amino-dodecanol (2adol). The core structure of aspercryptins is as follows: Ser/Ala-Thr-Ile/Val-2aoa-Aasn-2adol. The first step of aspercryptin biosynthesis is the generation of the fatty acid precursors, octanoic and dodecanoic acids, by the FAS subunits atnF and atnM. The fatty acid precursors are likely transformed into the corresponding alpha-amino fatty acids in three steps. First, they are hydroxylated by the cytochrome P450 monooxygenase atnE, then oxidized to the corresponding alpha-keto acids by the NAD(P)-dependent oxidoreductase atnD, and finally converted to the alpha-amino fatty acids by the PLP-dependent aminotransferases atnH or atnJ. the alpha-amino fatty acids, 2-amino-octanoic and 2-amino-dodecanoic acids, are recognized, activated, and covalently tethered to the NRPS atnA by its fourth and sixth adenylation domains. The second module of atnA is the Thr module and contains an epimerase (E) domain responsible for the epimerization of Thr to D-allo-Thr. Additionally, despite atnA having only one epimerase domain, the first amino acid of aspercryptin A1 is D-Ser, suggesting that serine is either loaded directly as D-Ser on the first module or that the epimerase domain in the threonine module epimerizes both L-Ser and L-Thr. After condensation of the hexapeptide of aspercryptin, the C-terminal reductase (TE) domain might be involved in the reductive release and production of the aldehyde hexapeptide. Further reduction would generate aspercryptins. The variety of aspercryptins produced reflects the flexibility of the atnA NRPS, allowing incorporation of alanine instead of serine, valine for isoleucine, and a C10 fatty amino alcohol instead of the C12 version. AtnB seems to be involved in the selectivity for Ile versus Val by the third module. Moreover, type B, C and D aspercryptins have an additional N-terminal cichorine, acetyl and propionyl group respectively. The protein is Aspercryptin biosynthesis cluster protein B of Emericella nidulans (strain FGSC A4 / ATCC 38163 / CBS 112.46 / NRRL 194 / M139) (Aspergillus nidulans).